We begin with the raw amino-acid sequence, 97 residues long: Sperm-associated acrosin inhibitor (97 aa).

Residues Met1–Phe26 form the signal peptide. Residues Thr32–Glu90 form the Kazal-like domain. Intrachain disulfides connect Cys38–Cys70, Cys48–Cys67, and Cys56–Cys88.

In terms of tissue distribution, seminal plasma.

The protein localises to the secreted. In terms of biological role, inhibits acrosin. The chain is Sperm-associated acrosin inhibitor from Sus scrofa (Pig).